The following is a 444-amino-acid chain: Tubulin beta chain (444 aa).

Positions 11, 69, 138, 142, 143, 144, 204, and 226 each coordinate GTP. Glu-69 serves as a coordination point for Mg(2+).

This sequence belongs to the tubulin family. In terms of assembly, dimer of alpha and beta chains. A typical microtubule is a hollow water-filled tube with an outer diameter of 25 nm and an inner diameter of 15 nM. Alpha-beta heterodimers associate head-to-tail to form protofilaments running lengthwise along the microtubule wall with the beta-tubulin subunit facing the microtubule plus end conferring a structural polarity. Microtubules usually have 13 protofilaments but different protofilament numbers can be found in some organisms and specialized cells. It depends on Mg(2+) as a cofactor.

It is found in the cytoplasm. Its subcellular location is the cytoskeleton. In terms of biological role, tubulin is the major constituent of microtubules, a cylinder consisting of laterally associated linear protofilaments composed of alpha- and beta-tubulin heterodimers. Microtubules grow by the addition of GTP-tubulin dimers to the microtubule end, where a stabilizing cap forms. Below the cap, tubulin dimers are in GDP-bound state, owing to GTPase activity of alpha-tubulin. The protein is Tubulin beta chain (TBB) of Onchocerca gibsoni.